A 200-amino-acid chain; its full sequence is Imidazole glycerol phosphate synthase subunit HisH (200 aa).

Residues D3–P200 form the Glutamine amidotransferase type-1 domain. C78 acts as the Nucleophile in catalysis. Residues H179 and E181 contribute to the active site.

Heterodimer of HisH and HisF.

The protein resides in the cytoplasm. It carries out the reaction 5-[(5-phospho-1-deoxy-D-ribulos-1-ylimino)methylamino]-1-(5-phospho-beta-D-ribosyl)imidazole-4-carboxamide + L-glutamine = D-erythro-1-(imidazol-4-yl)glycerol 3-phosphate + 5-amino-1-(5-phospho-beta-D-ribosyl)imidazole-4-carboxamide + L-glutamate + H(+). The catalysed reaction is L-glutamine + H2O = L-glutamate + NH4(+). It functions in the pathway amino-acid biosynthesis; L-histidine biosynthesis; L-histidine from 5-phospho-alpha-D-ribose 1-diphosphate: step 5/9. IGPS catalyzes the conversion of PRFAR and glutamine to IGP, AICAR and glutamate. The HisH subunit catalyzes the hydrolysis of glutamine to glutamate and ammonia as part of the synthesis of IGP and AICAR. The resulting ammonia molecule is channeled to the active site of HisF. The chain is Imidazole glycerol phosphate synthase subunit HisH from Xanthomonas campestris pv. campestris (strain 8004).